The sequence spans 397 residues: Succinyl-diaminopimelate desuccinylase (397 aa).

Histidine 73 lines the Zn(2+) pocket. The active site involves aspartate 75. Aspartate 106 contacts Zn(2+). Residue glutamate 140 is the Proton acceptor of the active site. Residues glutamate 141, glutamate 169, and histidine 366 each coordinate Zn(2+).

It belongs to the peptidase M20A family. DapE subfamily. Homodimer. Zn(2+) serves as cofactor. Requires Co(2+) as cofactor.

It carries out the reaction N-succinyl-(2S,6S)-2,6-diaminopimelate + H2O = (2S,6S)-2,6-diaminopimelate + succinate. It participates in amino-acid biosynthesis; L-lysine biosynthesis via DAP pathway; LL-2,6-diaminopimelate from (S)-tetrahydrodipicolinate (succinylase route): step 3/3. In terms of biological role, catalyzes the hydrolysis of N-succinyl-L,L-diaminopimelic acid (SDAP), forming succinate and LL-2,6-diaminopimelate (DAP), an intermediate involved in the bacterial biosynthesis of lysine and meso-diaminopimelic acid, an essential component of bacterial cell walls. The chain is Succinyl-diaminopimelate desuccinylase from Sinorhizobium medicae (strain WSM419) (Ensifer medicae).